A 102-amino-acid polypeptide reads, in one-letter code: Protein isd11 (102 aa).

Belongs to the complex I LYR family.

It localises to the mitochondrion. Its function is as follows. Required for mitochondrial iron-sulfur (Fe-S) protein biosynthesis. This chain is Protein isd11 (isd11), found in Schizosaccharomyces pombe (strain 972 / ATCC 24843) (Fission yeast).